Here is a 485-residue protein sequence, read N- to C-terminus: Glutamyl-tRNA(Gln) amidotransferase subunit A (485 aa).

Catalysis depends on charge relay system residues Lys79 and Ser154. Ser178 (acyl-ester intermediate) is an active-site residue.

The protein belongs to the amidase family. GatA subfamily. As to quaternary structure, heterotrimer of A, B and C subunits.

It catalyses the reaction L-glutamyl-tRNA(Gln) + L-glutamine + ATP + H2O = L-glutaminyl-tRNA(Gln) + L-glutamate + ADP + phosphate + H(+). Allows the formation of correctly charged Gln-tRNA(Gln) through the transamidation of misacylated Glu-tRNA(Gln) in organisms which lack glutaminyl-tRNA synthetase. The reaction takes place in the presence of glutamine and ATP through an activated gamma-phospho-Glu-tRNA(Gln). The protein is Glutamyl-tRNA(Gln) amidotransferase subunit A of Staphylococcus saprophyticus subsp. saprophyticus (strain ATCC 15305 / DSM 20229 / NCIMB 8711 / NCTC 7292 / S-41).